A 140-amino-acid chain; its full sequence is MRRRRGSDSAAYEARTRDIVVRVFPTYAAEESSPEQGLYLWSYTVEIENHGEETVTLIARRWTITDGFNRVNEVEGSGVVGEQPELKPREAFRYVSNCPLPTPSGAMRGSYQMVTDAGDLFDVAIPEFSLHLPGAAMKLN.

The ApaG domain occupies 13 to 137 (EARTRDIVVR…FSLHLPGAAM (125 aa)).

The polypeptide is Protein ApaG (Caulobacter vibrioides (strain ATCC 19089 / CIP 103742 / CB 15) (Caulobacter crescentus)).